The primary structure comprises 816 residues: Phosphatidylinositol 4-kinase beta (816 aa).

Disordered regions lie at residues M1 to L29, E99 to Q121, and R250 to S318. N-acetylglycine is present on G2. The tract at residues G2–I68 is interaction with ACBD3. The span at T10–L29 shows a compositional bias: low complexity. Positions L61 to S242 constitute a PIK helical domain. S258 carries the post-translational modification Phosphoserine. Phosphothreonine is present on T263. S266, S275, S277, S284, and S294 each carry phosphoserine. Polar residues-rich tracts occupy residues D278–K297 and S306–S318. S428 carries the phosphoserine modification. The residue at position 438 (T438) is a Phosphothreonine. S511 carries the post-translational modification Phosphoserine. A phosphothreonine mark is found at T517 and T519. Residues E535–T801 enclose the PI3K/PI4K catalytic domain. Positions V541–G547 are G-loop. Positions Q668–N676 are catalytic loop. The interval H687 to T711 is activation loop.

Belongs to the PI3/PI4-kinase family. Type III PI4K subfamily. As to quaternary structure, interacts with ARF1 and ARF3 in the Golgi complex, but not with ARF4, ARF5 or ARF6. Interacts with NCS1/FREQ in a calcium-independent manner. Interacts with CALN1/CABP8 and CALN2/CABP7; in a calcium-dependent manner; this interaction competes with NCS1/FREQ binding. Interacts with ACBD3. Interacts with ARMH3, YWHAB, YWHAE, YWHAG, YWHAH, YWHAQ, YWHAZ and SFN. Interacts with GGA2 (via VHS domain); the interaction is important for PI4KB location at the Golgi apparatus membrane. Interacts with ATG9A. Requires Mg(2+) as cofactor. The cofactor is Mn(2+). In terms of tissue distribution, strongly expressed in brain, kidney, lung, small intestine, uterus and adrenal gland. Weaker expression in liver, heart, skeletal muscle, thymus and testis. Not detected in spleen.

It is found in the golgi apparatus. Its subcellular location is the endomembrane system. It localises to the mitochondrion outer membrane. The protein resides in the rough endoplasmic reticulum membrane. The protein localises to the golgi apparatus membrane. It carries out the reaction a 1,2-diacyl-sn-glycero-3-phospho-(1D-myo-inositol) + ATP = a 1,2-diacyl-sn-glycero-3-phospho-(1D-myo-inositol 4-phosphate) + ADP + H(+). Its activity is regulated as follows. Inhibited by wortmannin. Increased kinase activity upon interaction with NCS1/FREQ. Its function is as follows. Phosphorylates phosphatidylinositol (PI) in the first committed step in the production of the second messenger inositol-1,4,5,-trisphosphate (PIP). May regulate Golgi disintegration/reorganization during mitosis, possibly via its phosphorylation. Involved in Golgi-to-plasma membrane trafficking. May play an important role in the inner ear development. This chain is Phosphatidylinositol 4-kinase beta (Pi4kb), found in Rattus norvegicus (Rat).